Reading from the N-terminus, the 193-residue chain is Small ribosomal subunit protein eS1 (193 aa).

Belongs to the eukaryotic ribosomal protein eS1 family.

In Methanobrevibacter smithii (strain ATCC 35061 / DSM 861 / OCM 144 / PS), this protein is Small ribosomal subunit protein eS1.